Reading from the N-terminus, the 468-residue chain is Zinc finger protein 672 (468 aa).

4 C2H2-type zinc fingers span residues 15–37 (YSCS…ERAH), 43–65 (FRCL…RWTH), 71–93 (YICS…LGTH), and 100–123 (CPCR…VRQH). The C2H2-type 5; degenerate zinc-finger motif lies at 129-151 (HRCPLCARSFRQSALPFHLARAH). C2H2-type zinc fingers lie at residues 167-189 (YHCT…SRIH), 202-224 (HRCG…LQRH), 230-252 (FKCP…QRTH), 258-280 (YACN…QRSH), 286-308 (HICA…QRSH), 314-336 (FPCP…LRTH), 342-364 (YHCE…LRNH), 370-392 (HKCP…RKTH), and 398-420 (AECT…QRSH).

Belongs to the krueppel C2H2-type zinc-finger protein family.

It is found in the nucleus. Its function is as follows. May be involved in transcriptional regulation. In Rattus norvegicus (Rat), this protein is Zinc finger protein 672 (Znf672).